The chain runs to 488 residues: MLKNKKLEFWFVVGSQNLYGEEALNAVKKDSKEIVDSLNESGKLPYPIVFKTLATSADEIKNIVKEINYRDEVAGVITWMHTFSPAKMWIAGTKLLQKPLLHLATQFNENIPWKTIDMDYMNLHQSAHGDREYGFINARLNKNNKVVVGYWKDNQVQKEIAEWMQVAYGYVASENIKVARFGDNMRNVAVTEGDKVEAQIQFGWTVDYFAIGDLVAEMNKVSQKDIDATYEEFKDIYILDIGDNDPEFYENHVKEQIKIEIGLRNFLEAGNYTAFTTNFEDLYGMKQLPGLAVQRLNAEGYGFAGEGDWKTAALNRLFKIMTDNKKTGFMEDYTYELSAGNERILGAHMLEVDPTLAASKPRVVVKPLGIGDKEAPARLIFDGVVGDGVVVSMLDLGTHYRLLINEVKAVKPTEDAPNLPVAKLVWQPQPNFKDAVKAWIYAGGGHHTVATLELTVEQVYDWSRMVGLETIVIDHNTNLRDIIKETSR.

Residues Glu-306, Glu-331, His-348, and His-447 each coordinate Mn(2+).

It belongs to the arabinose isomerase family. Requires Mn(2+) as cofactor.

It carries out the reaction beta-L-arabinopyranose = L-ribulose. Its pathway is carbohydrate degradation; L-arabinose degradation via L-ribulose; D-xylulose 5-phosphate from L-arabinose (bacterial route): step 1/3. Functionally, catalyzes the conversion of L-arabinose to L-ribulose. The chain is L-arabinose isomerase 1 from Clostridium acetobutylicum (strain ATCC 824 / DSM 792 / JCM 1419 / IAM 19013 / LMG 5710 / NBRC 13948 / NRRL B-527 / VKM B-1787 / 2291 / W).